The chain runs to 225 residues: UPF0173 metal-dependent hydrolase Pcal_1074 (225 aa).

This sequence belongs to the UPF0173 family.

The polypeptide is UPF0173 metal-dependent hydrolase Pcal_1074 (Pyrobaculum calidifontis (strain DSM 21063 / JCM 11548 / VA1)).